The chain runs to 252 residues: tRNA (guanine-N(7)-)-methyltransferase (252 aa).

S-adenosyl-L-methionine is bound by residues glutamate 75, glutamate 100, aspartate 127, and aspartate 150. Aspartate 150 is an active-site residue. A substrate-binding site is contributed by lysine 154. Positions arginine 156–arginine 161 are interaction with RNA. Substrate-binding positions include aspartate 186 and threonine 223–glutamate 226.

It belongs to the class I-like SAM-binding methyltransferase superfamily. TrmB family.

It carries out the reaction guanosine(46) in tRNA + S-adenosyl-L-methionine = N(7)-methylguanosine(46) in tRNA + S-adenosyl-L-homocysteine. Its pathway is tRNA modification; N(7)-methylguanine-tRNA biosynthesis. In terms of biological role, catalyzes the formation of N(7)-methylguanine at position 46 (m7G46) in tRNA. The sequence is that of tRNA (guanine-N(7)-)-methyltransferase from Xanthomonas oryzae pv. oryzae (strain MAFF 311018).